We begin with the raw amino-acid sequence, 139 residues long: Large ribosomal subunit protein uL22 (139 aa).

A disordered region spans residues 1-21 (MTAPTPEFRNKKQRKQQVKLR).

The protein belongs to the universal ribosomal protein uL22 family. Part of the 50S ribosomal subunit.

In terms of biological role, this protein binds specifically to 23S rRNA; its binding is stimulated by other ribosomal proteins, e.g. L4, L17, and L20. It is important during the early stages of 50S assembly. It makes multiple contacts with different domains of the 23S rRNA in the assembled 50S subunit and ribosome. Functionally, the globular domain of the protein is located near the polypeptide exit tunnel on the outside of the subunit, while an extended beta-hairpin is found that lines the wall of the exit tunnel in the center of the 70S ribosome. The chain is Large ribosomal subunit protein uL22 from Deinococcus deserti (strain DSM 17065 / CIP 109153 / LMG 22923 / VCD115).